A 403-amino-acid polypeptide reads, in one-letter code: S-adenosylmethionine synthase (403 aa).

His14 provides a ligand contact to ATP. Asp16 provides a ligand contact to Mg(2+). Glu42 provides a ligand contact to K(+). L-methionine is bound by residues Glu55 and Gln99. The tract at residues 99–109 is flexible loop; that stretch reads QSPEIAEGVDH. Residues 180–182, 250–251, Asp259, 265–266, Ala282, and Lys286 contribute to the ATP site; these read DAK, RF, and RK. Asp259 contributes to the L-methionine binding site. Residue Lys290 coordinates L-methionine.

This sequence belongs to the AdoMet synthase family. Homotetramer; dimer of dimers. The cofactor is Mg(2+). Requires K(+) as cofactor.

Its subcellular location is the cytoplasm. It catalyses the reaction L-methionine + ATP + H2O = S-adenosyl-L-methionine + phosphate + diphosphate. The protein operates within amino-acid biosynthesis; S-adenosyl-L-methionine biosynthesis; S-adenosyl-L-methionine from L-methionine: step 1/1. In terms of biological role, catalyzes the formation of S-adenosylmethionine (AdoMet) from methionine and ATP. The overall synthetic reaction is composed of two sequential steps, AdoMet formation and the subsequent tripolyphosphate hydrolysis which occurs prior to release of AdoMet from the enzyme. The chain is S-adenosylmethionine synthase from Deinococcus deserti (strain DSM 17065 / CIP 109153 / LMG 22923 / VCD115).